A 255-amino-acid polypeptide reads, in one-letter code: Pimeloyl-[acyl-carrier protein] methyl ester esterase (255 aa).

Substrate contacts are provided by residues Trp18, 78 to 79, and 139 to 143; these read SL and FLALD. Ser78 functions as the Nucleophile in the catalytic mechanism. Catalysis depends on residues Asp203 and His233. His233 serves as a coordination point for substrate.

It belongs to the AB hydrolase superfamily. Carboxylesterase BioH family. Monomer.

Its subcellular location is the cytoplasm. It catalyses the reaction 6-carboxyhexanoyl-[ACP] methyl ester + H2O = 6-carboxyhexanoyl-[ACP] + methanol + H(+). Its pathway is cofactor biosynthesis; biotin biosynthesis. Its function is as follows. The physiological role of BioH is to remove the methyl group introduced by BioC when the pimeloyl moiety is complete. It allows to synthesize pimeloyl-ACP via the fatty acid synthetic pathway through the hydrolysis of the ester bonds of pimeloyl-ACP esters. This is Pimeloyl-[acyl-carrier protein] methyl ester esterase from Xylella fastidiosa (strain M12).